The chain runs to 467 residues: MAELRAPSSLSTERNGSASNTDVDKQKLNHLYQNGNKKTGSAESRMLVLAETIRAETQKLHAYLESNGIAQPDLSVDAPDDFPPLPDEIQESRQKIFLASRELTDIVRGPRETVRYAVWSYLDTLSLQLINSYGIAKLVPLDAPIKLTELQSKTPLEPVHLARALRHAMTNNIFREPSPGYIAHTSSSRILAQDPALQAWVGFNSEDAFPAAGHVLQALKDHPEAISSTHAGFNYAFNTVGQEPMFATLGKDLARAKRFAQAMHSFSHGEGYKVSYFVDNYDLSEVDKRGGTFVDIGGSHGFVSVELAKRWKDMKFIVEDLPKTIESAPQPISDDKTVADRISLQAHDFFQEQPVKGADVYFFRWIIHNHAKPYAVSILRNLIPALKPGARVVINDYCIREAGSENAWDEKLLRNMDMIMGALLNAQEREEWEFRELFEAADPRFKFKGVQRVENCKMSVIEAVWDE.

The segment at 1–41 is disordered; the sequence is MAELRAPSSLSTERNGSASNTDVDKQKLNHLYQNGNKKTGS. Composition is skewed to polar residues over residues 8–21 and 31–41; these read SSLSTERNGSASNT and LYQNGNKKTGS. Aspartate 320 is a binding site for S-adenosyl-L-methionine. The Proton acceptor role is filled by histidine 368.

The protein belongs to the class I-like SAM-binding methyltransferase superfamily. Cation-independent O-methyltransferase family.

The enzyme catalyses 2,4,6-trichlorophenol + S-adenosyl-L-methionine = 2,4,6-trichloroanisole + S-adenosyl-L-homocysteine. Its activity is regulated as follows. S-adenosyl-L-homocysteine acts as a competitive inhibitor. Also strongly inhibited by low concentrations of several metal ions, such as Cu(2+), Hg(2+), Zn(2+), and Ag(+), and to a lesser extent by p-chloromercuribenzoic acid, but it is not significantly affected by several thiols or other thiol reagents. In terms of biological role, chlorophenol O-methyltransferase that methylates chlorophenols into chloroanisoles which are thought to be responsible for cork taint of wines. The only single chlorophenol (CP) methylated is 2-CP; neither 3-CP nor 4-CP are effective substrates. Within the dichlorophenols (DCPs), 2,4-DCP supports the highest rate of O-methylation, and the activity decreases in the following order: 2,3-DCP, 2,5-DCP, 2,6-DCP, and 3,4-DCP. Within the trichlorophenol (TCP) group, the maximal activity is observed with 2,3,4-TCP, whereas there is increasingly reduced activity with 2,4,5-TCP, 2,4,6-TCP, and 2,3,6-TCP. The only tetrachlorophenol (TeCP) that is methylated is 2,3,4,5-TeCP, since no activity can be detected with 2,3,4,6-TeCP and 2,3,5,6-TeCP. Is also able to methylate other halogenated phenols containing fluoro or bromo substituents, whereas other hydroxylated compounds, such as hydroxylated benzoic acids, hydroxybenzaldehydes, phenol, 2-metoxyphenol, and dihydroxybenzene, were not methylated. The chain is Chlorophenol O-methyltransferase from Trichoderma longibrachiatum.